Here is a 302-residue protein sequence, read N- to C-terminus: Putative thiol protease R355 (302 aa).

Residues His-182 and Asp-199 contribute to the active site. Cys-244 functions as the Nucleophile in the catalytic mechanism.

The protein belongs to the peptidase C48 family.

It is found in the virion. The polypeptide is Putative thiol protease R355 (Acanthamoeba polyphaga mimivirus (APMV)).